Reading from the N-terminus, the 1095-residue chain is Tyrosine-sulfated glycopeptide receptor 1 (1095 aa).

The chain crosses the membrane as a helical span at residues 23–43 (PHMVLFVLLYVLSISVFFLTV). N-linked (GlcNAc...) asparagine glycans are attached at residues asparagine 62 and asparagine 73. 19 LRR repeats span residues 91 to 115 (ENRV…VLDL), 116 to 139 (QRLS…FLSA), 141 to 165 (DQLL…SFGN), 170 to 195 (IFPI…VFLQ), 197 to 221 (AFNL…MCTA), 223 to 246 (PQLT…LSRC), 247 to 270 (SRLS…IYNL), 271 to 294 (PELE…ITRL), 295 to 318 (TKLT…IGKL), 320 to 342 (KLSS…LANC), 344 to 366 (KLVK…DFSR), 367 to 391 (FQSL…VYSC), 393 to 415 (MMTA…VLEL), 416 to 439 (ESLS…SILQ), 441 to 466 (CKKL…DFLR), 470 to 494 (FPSL…LIKL), 495 to 517 (QRVE…WLGT), 518 to 542 (LPDL…LFQL), and 566 to 589 (NPNN…IYIK). An N-linked (GlcNAc...) asparagine glycan is attached at asparagine 165. Residues asparagine 199, asparagine 204, and asparagine 207 are each glycosylated (N-linked (GlcNAc...) asparagine). The N-linked (GlcNAc...) asparagine glycan is linked to asparagine 258. Asparagine 341 carries N-linked (GlcNAc...) asparagine glycosylation. The N-linked (GlcNAc...) asparagine glycan is linked to asparagine 377. The N-linked (GlcNAc...) asparagine glycan is linked to asparagine 430. N-linked (GlcNAc...) asparagine glycosylation is found at asparagine 569, asparagine 592, asparagine 616, asparagine 627, asparagine 640, asparagine 662, and asparagine 714. 3 LRR repeats span residues 604–628 (LKVL…LSNL), 629–652 (TNLE…LTGL), and 654–677 (FLSY…QFDT). The helical transmembrane segment at 721 to 741 (LVLGLFFGVSLILVLLALLVL) threads the bilayer. Threonine 792 and threonine 800 each carry phosphothreonine. Positions 803–1074 (FSQANIIGCG…PNIQQVVDWL (272 aa)) constitute a Protein kinase domain. Residues 809-817 (IGCGGFGLV) and lysine 831 each bind ATP. Tyrosine 876 and tyrosine 916 each carry phosphotyrosine. Aspartate 929 acts as the Proton acceptor in catalysis. At tyrosine 971 the chain carries Phosphotyrosine.

Belongs to the protein kinase superfamily. Ser/Thr protein kinase family. Homo- and heterodimers with PSKR1. Interacts (via C-terminus) with AHA1 and AHA2 (via the R-domain). In terms of processing, autophosphorylated. Expressed ubiquitously, including in the shoot apical meristem and in the elongation zone of the root meristem.

The protein resides in the cell membrane. It carries out the reaction L-seryl-[protein] + ATP = O-phospho-L-seryl-[protein] + ADP + H(+). The enzyme catalyses L-threonyl-[protein] + ATP = O-phospho-L-threonyl-[protein] + ADP + H(+). In terms of biological role, tyrosine-sulfated glycopeptide receptor with a serine/threonine-protein kinase activity. Regulates, in response to tyrosine-sulfated glycopeptide binding, a signaling cascade involved in cellular proliferation and plant growth. Not involved in PSK perception. Involved in plant immunity, with antagonistic effects on bacterial and fungal resistances. Mediates activation of the plasma membrane H(+)-ATPase by PSY1. Phosphorylates AHA2 at Thr-881. The protein is Tyrosine-sulfated glycopeptide receptor 1 of Arabidopsis thaliana (Mouse-ear cress).